We begin with the raw amino-acid sequence, 103 residues long: uncharacterized protein (103 aa).

The region spanning 12-88 is the EthD domain; it reads ADPAAFDEHY…AAADVANFAS (77 aa).

This is an uncharacterized protein from Rhodococcus erythropolis (Arthrobacter picolinophilus).